Consider the following 31-residue polypeptide: U2-theraphotoxin-Hhn1a (31 aa).

3 cysteine pairs are disulfide-bonded: C2-C14, C7-C19, and C13-C26.

In terms of tissue distribution, expressed by the venom gland.

It localises to the secreted. Functionally, agglutinates erythrocytes. The chain is U2-theraphotoxin-Hhn1a from Cyriopagopus hainanus (Chinese bird spider).